We begin with the raw amino-acid sequence, 151 residues long: Putative UPF0320 protein YFL063W (151 aa).

This sequence belongs to the UPF0320 family.

This Saccharomyces cerevisiae (strain ATCC 204508 / S288c) (Baker's yeast) protein is Putative UPF0320 protein YFL063W.